Consider the following 1104-residue polypeptide: Ankyrin repeat- and BTB/POZ domain-containing protein 3 (1104 aa).

A helical membrane pass occupies residues I168–L188. The disordered stretch occupies residues S260–C301. The span at P264 to S276 shows a compositional bias: gly residues. ANK repeat units lie at residues Q603–V632, R649–G678, Y687–I716, G730–S759, and T825–E854. A BTB domain is found at S923 to L989.

It localises to the membrane. The chain is Ankyrin repeat- and BTB/POZ domain-containing protein 3 from Homo sapiens (Human).